The sequence spans 621 residues: (-)-beta-phellandrene synthase 1, chloroplastic (621 aa).

Residues 1–49 constitute a chloroplast transit peptide; the sequence is MALALVSVAPLVSMRRSLFSSPYELKSIDKTIPNLVMCRKRMSGTPSIR. 3 residues coordinate Mg(2+): Asp372, Asp376, and Asp524. A DDXXD motif motif is present at residues 372–376; that stretch reads DDIYD.

This sequence belongs to the terpene synthase family. Tpsd subfamily. The cofactor is Mg(2+). It depends on Mn(2+) as a cofactor.

It localises to the plastid. The protein resides in the chloroplast. It carries out the reaction (2E)-geranyl diphosphate = (-)-beta-phellandrene + diphosphate. Its pathway is terpene metabolism; oleoresin biosynthesis. The protein operates within secondary metabolite biosynthesis; terpenoid biosynthesis. Monoterpene synthase (TPS) involved in the biosynthesis of monoterpene natural products included in conifer oleoresin secretions and volatile emissions; these compounds contribute to biotic and abiotic stress defense against herbivores and pathogens. Catalyzes the conversion of (2E)-geranyl diphosphate (GPP) to (-)-beta-phellandrene and, to a lower extent, to (-)-alpha-phellandrene. In Pinus contorta (Shore pine), this protein is (-)-beta-phellandrene synthase 1, chloroplastic.